The following is a 730-amino-acid chain: Wall-associated receptor kinase-like 1 (730 aa).

Positions Met-1 to Ala-25 are cleaved as a signal peptide. At Ala-26–Gly-358 the chain is on the extracellular side. N-linked (GlcNAc...) asparagine glycosylation is found at Asn-34, Asn-40, Asn-70, Asn-77, Asn-92, Asn-119, Asn-132, Asn-211, Asn-233, Asn-269, and Asn-281. The segment at Cys-282–Cys-341 is atypical EGF-like. Cystine bridges form between Cys-284/Cys-297, Cys-319/Cys-331, and Cys-325/Cys-341. A helical transmembrane segment spans residues Ile-359 to Ile-379. Over Lys-380 to Arg-730 the chain is Cytoplasmic. Residues Phe-429–Ile-702 form the Protein kinase domain. ATP contacts are provided by residues Leu-435–Val-443 and Lys-457. Tyr-502 bears the Phosphotyrosine mark. The active-site Proton acceptor is the Asp-554. Phosphothreonine occurs at positions 588 and 593. Tyr-601 carries the post-translational modification Phosphotyrosine. The tract at residues Lys-685–Arg-730 is disordered. Residues Asn-691 to Glu-714 show a composition bias toward basic and acidic residues.

Belongs to the protein kinase superfamily. Ser/Thr protein kinase family. In terms of tissue distribution, preferentially expressed in roots and flowers.

Its subcellular location is the membrane. The enzyme catalyses L-seryl-[protein] + ATP = O-phospho-L-seryl-[protein] + ADP + H(+). It carries out the reaction L-threonyl-[protein] + ATP = O-phospho-L-threonyl-[protein] + ADP + H(+). In terms of biological role, serine/threonine-protein kinase that may function as a signaling receptor of extracellular matrix component. This is Wall-associated receptor kinase-like 1 (WAKL1) from Arabidopsis thaliana (Mouse-ear cress).